The following is a 160-amino-acid chain: SDDKKAKAATSSVLTKFTQNQIQEMKEAFTMIDQNRDGLIDVSDLKEMYSNLGTAPQDSVLQAMVKEAPQMNFTGFLSLFSEKMSGTDPEETLRNAFQMFDSDNTGYIPEEYMKDLLENMGDNFSKDEVRQTWKEAPIAGGKVDYNAFVSKIKGKEQDDA.

A Blocked amino end (Ser) modification is found at Ser-1. Ser-11 bears the Phosphoserine mark. EF-hand domains lie at 20–55 (NQIQ…LGTA) and 88–123 (DPEE…MGDN). Ca(2+) is bound by residues Asp-33, Asn-35, Asp-37, and Asp-44.

Functionally, in molluscan muscle, calcium regulation is associated with myosin rather than with actin. Muscle myosin contains two types of light chains: the catalytic light chain, essential for ATPase activity, and the regulatory light chain, a calcium-binding protein responsible for Ca(2+) dependent binding and Ca(2+) dependent Mg-ATPase activity. This is Myosin regulatory light chain, smooth muscle from Spisula sachalinensis (Sakhalin surf-clam).